Consider the following 250-residue polypeptide: 1-(5-phosphoribosyl)-5-[(5-phosphoribosylamino)methylideneamino] imidazole-4-carboxamide isomerase (250 aa).

Asp12 functions as the Proton acceptor in the catalytic mechanism. Asp134 functions as the Proton donor in the catalytic mechanism.

It belongs to the HisA/HisF family.

Its subcellular location is the cytoplasm. The catalysed reaction is 1-(5-phospho-beta-D-ribosyl)-5-[(5-phospho-beta-D-ribosylamino)methylideneamino]imidazole-4-carboxamide = 5-[(5-phospho-1-deoxy-D-ribulos-1-ylimino)methylamino]-1-(5-phospho-beta-D-ribosyl)imidazole-4-carboxamide. It participates in amino-acid biosynthesis; L-histidine biosynthesis; L-histidine from 5-phospho-alpha-D-ribose 1-diphosphate: step 4/9. In Actinobacillus pleuropneumoniae serotype 7 (strain AP76), this protein is 1-(5-phosphoribosyl)-5-[(5-phosphoribosylamino)methylideneamino] imidazole-4-carboxamide isomerase.